Consider the following 398-residue polypeptide: NADH-quinone oxidoreductase subunit D (398 aa).

This sequence belongs to the complex I 49 kDa subunit family. In terms of assembly, NDH-1 is composed of 14 different subunits. Subunits NuoB, C, D, E, F, and G constitute the peripheral sector of the complex.

Its subcellular location is the cell inner membrane. It catalyses the reaction a quinone + NADH + 5 H(+)(in) = a quinol + NAD(+) + 4 H(+)(out). Its function is as follows. NDH-1 shuttles electrons from NADH, via FMN and iron-sulfur (Fe-S) centers, to quinones in the respiratory chain. The immediate electron acceptor for the enzyme in this species is believed to be ubiquinone. Couples the redox reaction to proton translocation (for every two electrons transferred, four hydrogen ions are translocated across the cytoplasmic membrane), and thus conserves the redox energy in a proton gradient. This chain is NADH-quinone oxidoreductase subunit D, found in Bradyrhizobium sp. (strain BTAi1 / ATCC BAA-1182).